Consider the following 904-residue polypeptide: Toll-like receptor 3 (904 aa).

Positions Met1–Ala26 are cleaved as a signal peptide. An LRRNT domain is found at His27–Thr52. Residues His27–Leu705 are Lumenal-facing. Residues Cys29 and Cys38 are joined by a disulfide bond. Asn53, Asn58, and Asn71 each carry an N-linked (GlcNAc...) asparagine glycan. 6 LRR repeats span residues Asn53–Arg74, Gln77–Ser98, Trp101–Phe122, Asn125–Asn146, Asn149–Gln170, and Asn173–Phe194. An intrachain disulfide couples Cys96 to Cys123. Asn125 carries N-linked (GlcNAc...) asparagine glycosylation. Asn197 is a glycosylation site (N-linked (GlcNAc...) asparagine). 2 LRR repeats span residues Ser199–Thr220 and Glu223–Glu245. N-linked (GlcNAc...) asparagine glycosylation is found at Asn248, Asn253, Asn276, and Asn292. LRR repeat units lie at residues Ser250–Gly271, Asn276–Trp297, His300–Gly321, Asn324–Pro345, Cys357–Gly378, Arg381–Thr401, Pro409–Trp430, His433–Gly455, Tyr466–Met487, Asn508–Gly529, Lys532–Gly553, His564–Asp585, Glu588–Asn609, and Ser612–Pro633. Residue Asn399 is glycosylated (N-linked (GlcNAc...) asparagine). Residues Asn637, Asn663, and Asn668 are each glycosylated (N-linked (GlcNAc...) asparagine). An LRRCT domain is found at Asn646–Asp699. Cystine bridges form between Cys650-Cys678 and Cys652-Cys697. A helical transmembrane segment spans residues Leu706 to Phe726. The Cytoplasmic segment spans residues Glu727–His904. A TIR domain is found at Phe754 to Leu897. Residue Tyr759 is modified to Phosphotyrosine. Glycyl lysine isopeptide (Lys-Gly) (interchain with G-Cter in ubiquitin) cross-links involve residues Lys765, Lys812, and Lys831. At Tyr858 the chain carries Phosphotyrosine.

This sequence belongs to the Toll-like receptor family. Monomer and homodimer; dimerization is triggered by ligand-binding, the signaling unit is composed of one ds-RNA of around 40 bp and two TLR3 molecules, and lateral clustering of signaling units along the length of the ds-RNA ligand is required for TLR3 signal transduction. Interacts (via transmembrane domain) with UNC93B1; the interaction is required for transport from the ER to the endosomes. Interacts with TICAM1 (via the TIR domain) in response to poly(I:C) and this interaction is enhanced in the presence of WDFY1. Interacts with SRC; upon binding of double-stranded RNA. The tyrosine-phosphorylated form (via TIR domain) interacts with WDFY1 (via WD repeat 2) in response to poly(I:C). TLR3 signaling requires a proteolytic cleavage mediated by cathepsins CTSB and CTSH, the cleavage occurs between amino acids 252 and 346. The cleaved form of TLR3 is the predominant form found in endosomes. In terms of processing, ubiquitinated by TRIM3; leading to recognition and sorting of polyubiquitinated TLR3 by the ESCRT complexes. Ubiquitinated by ZNRF1 via 'Lys-63'-linked ubiquitin chains; leading to TLR3 lysosomal trafficking and degradation. Ubiquitinated by RNF170 at Lys-765 via 'Lys-48'-linked ubiquitin chains; leading to TLR3 proteasomal degradation.

The protein resides in the endoplasmic reticulum membrane. It is found in the endosome membrane. Its subcellular location is the early endosome. Functionally, key component of innate and adaptive immunity. TLRs (Toll-like receptors) control host immune response against pathogens through recognition of molecular patterns specific to microorganisms. TLR3 is a nucleotide-sensing TLR which is activated by double-stranded RNA, a sign of viral infection. Acts via the adapter TRIF/TICAM1, leading to NF-kappa-B activation, IRF3 nuclear translocation, cytokine secretion and the inflammatory response. The chain is Toll-like receptor 3 (TLR3) from Bos taurus (Bovine).